A 348-amino-acid chain; its full sequence is Calcium/calmodulin-dependent protein kinase type 1 (348 aa).

A Nuclear localization signal 1 motif is present at residues 7–22 (RDGSGPAPNATIREKY). Residues 22 to 278 (YDFRDVLGTG…CQDALSHPWI (257 aa)) form the Protein kinase domain. ATP-binding positions include 28-36 (LGTGAFSKV) and K52. Positions 71–78 (KVLRKLRH) match the Nuclear localization signal 2 motif. The Proton acceptor role is filled by D144. T179 carries the phosphothreonine; by ckk-1 modification. The interval 278-318 (ISGNTAYTHDIHGTVAVHLKKSLAKRNWKKAYNAAAAIRQL) is autoinhibitory domain. The short motif at 288–294 (IHGTVAV) is the Nuclear export sequence element. The Nuclear localization signal 3 signature appears at 297-307 (KKSLAKRNWKK). The segment at 298–319 (KSLAKRNWKKAYNAAAAIRQLQ) is calmodulin-binding. Positions 327 to 338 (SNRLQKQASQQQ) are enriched in polar residues. The disordered stretch occupies residues 327–348 (SNRLQKQASQQQPEPPTPAFHA). Positions 339–348 (PEPPTPAFHA) are enriched in pro residues.

The protein belongs to the protein kinase superfamily. CAMK Ser/Thr protein kinase family. CaMK subfamily. As to quaternary structure, interacts with importin ima-3; affinity for ima-3 is increased in the presence of Ca(2+) and calmodulin and leads to increased nuclear accumulation of cmk-1 in FLP neurons upon prolonged heat activation. It depends on Mg(2+) as a cofactor. Post-translationally, phosphorylation at Thr-179 can promote both nuclear export and import, sustaining nucleocytoplasmic shuttling. As to expression, expressed in head and tail neurons and vulval muscles. Throughout the nervous system. Detected in neurites and neuronal cell bodies. Expressed in the mechanosensory neurons, AVM and ALM, and in the interneurons, AVA, AVB and AVD. Expressed in the right and left ASE neurons where it functions cell-autonomously to control salt-avoidance learning. Expressed in FLP and AFD thermosensory neurons.

It localises to the nucleus. The protein localises to the cytoplasm. The catalysed reaction is L-seryl-[protein] + ATP = O-phospho-L-seryl-[protein] + ADP + H(+). It catalyses the reaction L-threonyl-[protein] + ATP = O-phospho-L-threonyl-[protein] + ADP + H(+). With respect to regulation, activated by Ca(2+)/calmodulin. Binding of calmodulin results in a conformational change that generates functional binding sites for both substrate and ATP, and thus relieves autoinhibition and lowers the Km of substrate binding. Must be phosphorylated by ckk-1 to be maximally active but this does not appear to be required for activity in AFD neurons. Calcium/calmodulin-dependent protein kinase that operates in the calcium-triggered CaMKK-CaMK1 signaling cascade which results in transcriptional activation. Transcriptional activation occurs at least in part through phosphorylation of crh-1. Regulates gene expression, sensory morphology, and function of the AFD thermosensory neurons. Involved in long-term adaptation of AFD neurons to temperatures warmer than the initial acclimatized cultivation temperature. Acts in the FLP thermal nociceptors to moderate the responsiveness to noxious heat and controls neuropeptide release from FLP neurons in response to temperature elevations. Regulates the dauer decision, the decision of the larvae to enter into the alternative stress-resistant and long-lived dauer developmental stage, based on the feeding state, primarily in the AWC sensory neurons. Acts non cell-autonomously in the AWC neurons to regulate expression of the daf-28 insulin-like peptide and cell-autonomously in the ASI sensory neurons to regulate expression of the growth promoting daf-7 in a food-regulated manner. Plays a role in memory-based thermal response of an individual AFD neuron cell. Influences habituation and sensitivity to repeated mechanosensory stimuli. Involved in chemotaxis response in AWC neurons to attractant 2-heptanone, a volatile organic compound emitted by the nematode pathogenic bacterium B.nematocida B16. Acts in the ASE salt-sensing neurons to promote a type of aversive gustatory-associated learning called salt-avoidance learning via regulation of crh-1 signaling and the promotion of long-term memory formation, but is not involved in salt attraction. Represses transcription of glutamate receptor glr-1 in the nucleus basally and in response to changes in synaptic activity. The polypeptide is Calcium/calmodulin-dependent protein kinase type 1 (Caenorhabditis elegans).